The primary structure comprises 496 residues: MTTDQLPAELERVHMVGIGGAGMSGIARILLDRGGLVSGSDAKESRGIHALRARGAQIRIGHDASSLDLLPGGPTAVITTHAAIPKTNPELVEARRRGIPVILRPAVLAKLMDGRTTLMVTGTHGKTTTTSMLIVALQHCGRDPSFAVGGEMGEAGTNAHHGSGDCFVAEADESDGSLLEYTPDVAVVTNIETDHLDFYGSADAYVAVFDAFVERLAPGGALVVCVDDPGAAALARRTAELGIRVLRYGSGPHGQAPSGEPLAATLVSWQQQGTEAVAQIRLAGEQQHPLVMRLSVPGRHMALNALGALLAAIEIGAPTEAVLDGLAGFEGVRRRFELVGTAGGSAPSSTVRVFDDYAHHPTEIAATLAAVRTLLEQSGGGRSIAVFQPHLYSRTKAFAEEFGHALDAADEVFVLDVYGAREQPLAGVSGASVAEHVSVPVRYLPDFSAAAEQVAAAAAPGDVIVTMGAGDVTLLGPEIVTALRVRANRGAPGALR.

122–128 lines the ATP pocket; sequence GTHGKTT.

The protein belongs to the MurCDEF family.

The protein localises to the cytoplasm. It carries out the reaction UDP-N-acetyl-alpha-D-muramate + L-alanine + ATP = UDP-N-acetyl-alpha-D-muramoyl-L-alanine + ADP + phosphate + H(+). It functions in the pathway cell wall biogenesis; peptidoglycan biosynthesis. Its function is as follows. Cell wall formation. The polypeptide is UDP-N-acetylmuramate--L-alanine ligase (Mycobacterium avium (strain 104)).